The sequence spans 452 residues: Flavin-containing monooxygenase FMO GS-OX-like 4 (452 aa).

17–22 provides a ligand contact to FAD; the sequence is GAGAAG. 217–222 is an NADP(+) binding site; it reads GNSASA.

The protein belongs to the FMO family. FAD serves as cofactor.

Catalyzes the conversion of methylthioalkyl glucosinolates of any chain length into methylsulfinylalkyl glucosinolates. This is Flavin-containing monooxygenase FMO GS-OX-like 4 from Arabidopsis thaliana (Mouse-ear cress).